The following is a 171-amino-acid chain: Transcriptional repressor NrdR (171 aa).

A zinc finger lies at 3 to 34; it reads CPFCGDPNTQVADTRENEGGEVVRRRRRCPKC. An ATP-cone domain is found at 49–139; that stretch reads PHIVKRNGNR…VYRNFADVDE (91 aa). Residues 148–171 form a disordered region; that stretch reads KARPKRNRPAEPPEPTSENDLFRS.

The protein belongs to the NrdR family. Zn(2+) is required as a cofactor.

Functionally, negatively regulates transcription of bacterial ribonucleotide reductase nrd genes and operons by binding to NrdR-boxes. This Aromatoleum aromaticum (strain DSM 19018 / LMG 30748 / EbN1) (Azoarcus sp. (strain EbN1)) protein is Transcriptional repressor NrdR.